A 486-amino-acid chain; its full sequence is Adenosylhomocysteinase (486 aa).

Positions 63, 147, and 209 each coordinate substrate. Residue 210 to 212 coordinates NAD(+); it reads TTT. Substrate is bound by residues Lys-239 and Asp-243. Residues Asn-244, 273–278, Glu-296, Asn-331, 352–354, and Asn-400 contribute to the NAD(+) site; these read GYGDVG and IGH.

It belongs to the adenosylhomocysteinase family. Requires NAD(+) as cofactor.

It carries out the reaction S-adenosyl-L-homocysteine + H2O = L-homocysteine + adenosine. The protein operates within amino-acid biosynthesis; L-homocysteine biosynthesis; L-homocysteine from S-adenosyl-L-homocysteine: step 1/1. Adenosylhomocysteine is a competitive inhibitor of S-adenosyl-L-methionine-dependent methyl transferase reactions; therefore adenosylhomocysteinase may play a key role in the control of methylations via regulation of the intracellular concentration of adenosylhomocysteine. This is Adenosylhomocysteinase from Trichomonas vaginalis.